A 363-amino-acid polypeptide reads, in one-letter code: U-box domain-containing protein 62 (363 aa).

Positions Lys74–Gly117 are disordered. Residues Asp87–Glu107 show a composition bias toward acidic residues. A U-box domain is found at Ser181–Gln253. The interval Ala343–Leu363 is disordered.

The catalysed reaction is S-ubiquitinyl-[E2 ubiquitin-conjugating enzyme]-L-cysteine + [acceptor protein]-L-lysine = [E2 ubiquitin-conjugating enzyme]-L-cysteine + N(6)-ubiquitinyl-[acceptor protein]-L-lysine.. It functions in the pathway protein modification; protein ubiquitination. Its function is as follows. Functions as an E3 ubiquitin ligase. The chain is U-box domain-containing protein 62 (PUB62) from Arabidopsis thaliana (Mouse-ear cress).